The chain runs to 244 residues: L-xylulose reductase (244 aa).

At methionine 1 the chain carries N-acetylmethionine. 11-39 contacts NADP(+); the sequence is LVTGAGKGIGRSTVLALQAAGAHVVAVSR. Omega-N-methylarginine is present on arginine 21. Position 46 is a phosphoserine (serine 46). Serine 136 contacts substrate. Tyrosine 149 serves as the catalytic Proton acceptor. Lysine 153 is an active-site residue.

This sequence belongs to the short-chain dehydrogenases/reductases (SDR) family. Homotetramer. As to expression, highly expressed in kidney and liver. Expressed in epididymis. Weakly expressed in brain, heart, lung, spleen and testis.

The protein resides in the membrane. Its subcellular location is the cytoplasmic vesicle. It localises to the secretory vesicle. It is found in the acrosome. It carries out the reaction xylitol + NADP(+) = L-xylulose + NADPH + H(+). Its function is as follows. Catalyzes the NADPH-dependent reduction of several pentoses, tetroses, trioses, alpha-dicarbonyl compounds and L-xylulose. Participates in the uronate cycle of glucose metabolism. May play a role in the water absorption and cellular osmoregulation in the proximal renal tubules by producing xylitol, an osmolyte, thereby preventing osmolytic stress from occurring in the renal tubules. This Mesocricetus auratus (Golden hamster) protein is L-xylulose reductase (DCXR).